Consider the following 388-residue polypeptide: Chorismate synthase (388 aa).

Residues Arg-39 and Arg-45 each contribute to the NADP(+) site. FMN-binding positions include 130–132, 251–252, Gly-296, 311–315, and Arg-337; these read RSS, NA, and KPIPT.

This sequence belongs to the chorismate synthase family. Homotetramer. The cofactor is FMNH2.

It catalyses the reaction 5-O-(1-carboxyvinyl)-3-phosphoshikimate = chorismate + phosphate. It participates in metabolic intermediate biosynthesis; chorismate biosynthesis; chorismate from D-erythrose 4-phosphate and phosphoenolpyruvate: step 7/7. In terms of biological role, catalyzes the anti-1,4-elimination of the C-3 phosphate and the C-6 proR hydrogen from 5-enolpyruvylshikimate-3-phosphate (EPSP) to yield chorismate, which is the branch point compound that serves as the starting substrate for the three terminal pathways of aromatic amino acid biosynthesis. This reaction introduces a second double bond into the aromatic ring system. The chain is Chorismate synthase from Lactococcus lactis subsp. cremoris (strain SK11).